Consider the following 198-residue polypeptide: Peroxiredoxin-2 (198 aa).

Alanine 2 carries the post-translational modification N-acetylalanine. In terms of domain architecture, Thioredoxin spans 6–164 (ARIGKPAPDF…ALRLVQAFQY (159 aa)). Cysteine 51 serves as the catalytic Cysteine sulfenic acid (-SOH) intermediate. Serine 112 is subject to Phosphoserine. Threonine 182 carries the phosphothreonine modification. Lysine 196 is modified (N6-acetyllysine).

It belongs to the peroxiredoxin family. AhpC/Prx1 subfamily. In terms of assembly, homodimer; disulfide-linked, upon oxidation. 5 homodimers assemble to form a ring-like decamer. Interacts with TIPIN. The enzyme can be inactivated by further oxidation of the cysteine sulfenic acid (C(P)-SOH) to sulphinic acid (C(P)-SO2H) instead of its condensation to a disulfide bond. It can be reactivated by forming a transient disulfide bond with sulfiredoxin SRXN1, which reduces the cysteine sulfinic acid in an ATP- and Mg-dependent manner. In terms of processing, acetylation increases resistance to transition to high molecular-mass complexes. Deacetylated by HDAC6 which decreases reducing activity.

Its subcellular location is the cytoplasm. The enzyme catalyses a hydroperoxide + [thioredoxin]-dithiol = an alcohol + [thioredoxin]-disulfide + H2O. Its function is as follows. Thiol-specific peroxidase that catalyzes the reduction of hydrogen peroxide and organic hydroperoxides to water and alcohols, respectively. Plays a role in cell protection against oxidative stress by detoxifying peroxides and as sensor of hydrogen peroxide-mediated signaling events. Might participate in the signaling cascades of growth factors and tumor necrosis factor-alpha by regulating the intracellular concentrations of H(2)O(2). The chain is Peroxiredoxin-2 (PRDX2) from Macaca fascicularis (Crab-eating macaque).